The chain runs to 201 residues: Imidazole glycerol phosphate synthase subunit HisH (201 aa).

The Glutamine amidotransferase type-1 domain occupies 1–201; it reads MVFIADYGAG…LKVLANFAEL (201 aa). Cysteine 79 (nucleophile) is an active-site residue. Catalysis depends on residues histidine 183 and glutamate 185.

As to quaternary structure, heterodimer of HisH and HisF.

The protein resides in the cytoplasm. It carries out the reaction 5-[(5-phospho-1-deoxy-D-ribulos-1-ylimino)methylamino]-1-(5-phospho-beta-D-ribosyl)imidazole-4-carboxamide + L-glutamine = D-erythro-1-(imidazol-4-yl)glycerol 3-phosphate + 5-amino-1-(5-phospho-beta-D-ribosyl)imidazole-4-carboxamide + L-glutamate + H(+). It catalyses the reaction L-glutamine + H2O = L-glutamate + NH4(+). Its pathway is amino-acid biosynthesis; L-histidine biosynthesis; L-histidine from 5-phospho-alpha-D-ribose 1-diphosphate: step 5/9. Functionally, IGPS catalyzes the conversion of PRFAR and glutamine to IGP, AICAR and glutamate. The HisH subunit catalyzes the hydrolysis of glutamine to glutamate and ammonia as part of the synthesis of IGP and AICAR. The resulting ammonia molecule is channeled to the active site of HisF. The polypeptide is Imidazole glycerol phosphate synthase subunit HisH (Chlorobium chlorochromatii (strain CaD3)).